A 104-amino-acid polypeptide reads, in one-letter code: Circadian clock oscillator protein KaiB (104 aa).

This sequence belongs to the KaiB family. As to quaternary structure, the KaiABC complex composition changes during the circadian cycle to control KaiC phosphorylation. Complexes KaiC(6), KaiA(2-4):KaiC(6), KaiB(6):KaiC(6) and KaiC(6):KaiB(6):KaiA(12) are among the most important forms, many form cooperatively. Undergoes a major conformational rearrangment; in the free state forms homotetramers as a dimer of dimers. When bound to the CI domain of KaiC switches to a monomeric thioredoxin-fold (KaiB(fs)). KaiB(fs) binds CikA, leading it to dephosphorylate phospho-RpaA.

Key component of the KaiABC oscillator complex, which constitutes the main circadian regulator in cyanobacteria. Complex composition changes during the circadian cycle to control KaiC phosphorylation. KaiA stimulates KaiC autophosphorylation, while KaiB sequesters KaiA, leading to KaiC autodephosphorylation. Phospho-Ser-431 KaiC accumulation triggers binding of KaiB to form the KaiB(6):KaiC(6) complex, leading to changes in output regulators CikA and SasA. KaiB switches to a thioredoxin-like fold (KaiB(fs)) when bound to KaiC. KaiB(6):KaiC(6) formation exposes a site for KaiA binding that sequesters KaiA from KaiC, making the KaiC(6):KaiB(6):KaiA(12) complex that results in KaiC autodephosphorylation. Functionally, a metamorphic protein which reversibly switches between an inactive tetrameric fold and a rare, thioredoxin-like monomeric fold (KaiB(fs)). KaiB(fs) binds phospho-KaiC, KaiA and CikA. KaiA and CikA compete for binding to KaiB(fs), and KaiB(fs) and SasA compete for binding to KaiC, thus the clock oscillator and output signal pathway are tightly coupled. The chain is Circadian clock oscillator protein KaiB from Rippkaea orientalis (strain PCC 8801 / RF-1) (Cyanothece sp. (strain PCC 8801)).